Reading from the N-terminus, the 130-residue chain is Large ribosomal subunit protein bL12c (130 aa).

It belongs to the bacterial ribosomal protein bL12 family. As to quaternary structure, homodimer. Part of the ribosomal stalk of the 50S ribosomal subunit. Forms a multimeric L10(L12)X complex, where L10 forms an elongated spine to which 2 to 4 L12 dimers bind in a sequential fashion. Binds GTP-bound translation factors.

Its subcellular location is the plastid. The protein localises to the chloroplast. In terms of biological role, forms part of the ribosomal stalk which helps the ribosome interact with GTP-bound translation factors. Is thus essential for accurate translation. The sequence is that of Large ribosomal subunit protein bL12c from Cyanidium caldarium (Red alga).